A 616-amino-acid chain; its full sequence is Endonuclease 8-like 3 (616 aa).

The FPG-type zinc finger occupies 271–305 (KVYKRPNCGQCGTKITVCRLGEHNRMTYFCPKCQK). A RanBP2-type zinc finger spans residues 341–370 (KEEHWACAVCTLINKPSDKQCDACLTLRPE). Positions 491–524 (LKTGHTTSNTIHLSSTISSPQSKMTGDAAAKTGN) are disordered. Residues 494-514 (GHTTSNTIHLSSTISSPQSKM) show a composition bias toward polar residues. 8 residues coordinate Zn(2+): Cys527, His530, Cys553, Cys561, Cys574, His576, Cys599, and Cys607. 2 GRF-type zinc fingers span residues 527 to 570 (CSAH…ADLH) and 574 to 616 (CNHG…AKTE).

It belongs to the FPG family.

The protein localises to the nucleus. Its subcellular location is the chromosome. The enzyme catalyses 2'-deoxyribonucleotide-(2'-deoxyribose 5'-phosphate)-2'-deoxyribonucleotide-DNA = a 3'-end 2'-deoxyribonucleotide-(2,3-dehydro-2,3-deoxyribose 5'-phosphate)-DNA + a 5'-end 5'-phospho-2'-deoxyribonucleoside-DNA + H(+). Functionally, DNA glycosylase which prefers single-stranded DNA (ssDNA), or partially ssDNA structures such as bubble and fork structures, to double-stranded DNA (dsDNA). Mediates interstrand cross-link repair in response to replication stress: recruited to replication stress sites via interaction with ubiquitinated CMG helicase and acts by mediating DNA glycosylase activity. Cleaves one of the two N-glycosyl bonds comprising the interstrand cross-link, which avoids the formation of a double-strand break but generates an abasic site that is bypassed by translesion synthesis polymerases. The chain is Endonuclease 8-like 3 from Xenopus laevis (African clawed frog).